A 176-amino-acid chain; its full sequence is Large ribosomal subunit protein uL10 (176 aa).

The protein belongs to the universal ribosomal protein uL10 family. Part of the ribosomal stalk of the 50S ribosomal subunit. The N-terminus interacts with L11 and the large rRNA to form the base of the stalk. The C-terminus forms an elongated spine to which L12 dimers bind in a sequential fashion forming a multimeric L10(L12)X complex.

In terms of biological role, forms part of the ribosomal stalk, playing a central role in the interaction of the ribosome with GTP-bound translation factors. In Natranaerobius thermophilus (strain ATCC BAA-1301 / DSM 18059 / JW/NM-WN-LF), this protein is Large ribosomal subunit protein uL10.